Consider the following 299-residue polypeptide: Protease HtpX homolog (299 aa).

2 helical membrane passes run 15 to 35 and 39 to 59; these read ILLLVFFLLLALVGYAVGYLF and GLGGLVIALIIGFIYALSMIF. Histidine 143 is a Zn(2+) binding site. Glutamate 144 is an active-site residue. Histidine 147 provides a ligand contact to Zn(2+). 2 helical membrane passes run 158-178 and 198-218; these read IAVALASAITMLSGMAGRMMW and IIMLVVSLLAIVLAPLAATLV. Position 227 (glutamate 227) interacts with Zn(2+).

The protein belongs to the peptidase M48B family. Requires Zn(2+) as cofactor.

Its subcellular location is the cell membrane. In Streptococcus pneumoniae (strain P1031), this protein is Protease HtpX homolog.